The sequence spans 141 residues: Large ribosomal subunit protein uL11 (141 aa).

The protein belongs to the universal ribosomal protein uL11 family. In terms of assembly, part of the ribosomal stalk of the 50S ribosomal subunit. Interacts with L10 and the large rRNA to form the base of the stalk. L10 forms an elongated spine to which L12 dimers bind in a sequential fashion forming a multimeric L10(L12)X complex. One or more lysine residues are methylated.

Forms part of the ribosomal stalk which helps the ribosome interact with GTP-bound translation factors. This chain is Large ribosomal subunit protein uL11, found in Thermomicrobium roseum (strain ATCC 27502 / DSM 5159 / P-2).